The sequence spans 184 residues: GMP synthase [glutamine-hydrolyzing] subunit A (184 aa).

A Glutamine amidotransferase type-1 domain is found at 3 to 184 (PLYVVNNHGQ…FENFDGICSE (182 aa)). The active-site Nucleophile is the Cys75. Residues His162 and Glu164 contribute to the active site.

Heterodimer composed of a glutamine amidotransferase subunit (A) and a GMP-binding subunit (B).

It catalyses the reaction XMP + L-glutamine + ATP + H2O = GMP + L-glutamate + AMP + diphosphate + 2 H(+). Its pathway is purine metabolism; GMP biosynthesis; GMP from XMP (L-Gln route): step 1/1. Its function is as follows. Catalyzes the synthesis of GMP from XMP. This is GMP synthase [glutamine-hydrolyzing] subunit A from Methanoculleus marisnigri (strain ATCC 35101 / DSM 1498 / JR1).